The primary structure comprises 159 residues: MFKKLLLATSALTFSLSLVLPLDGHAKAQEVTLQAQQEVTYQTPVKLSELPTNTTEQSGEFHTNGIKKWIAKEAMKATASALRHGGRIVGEVVDELGGSAGKTFAKHTDDVADALDELVKRGDVVEDAIIDTVSSYLIDAGVKSSTARTIASVFTFLAF.

This is an uncharacterized protein from Bacillus subtilis (strain 168).